The sequence spans 345 residues: Phosphate acyltransferase (345 aa).

This sequence belongs to the PlsX family. In terms of assembly, homodimer. Probably interacts with PlsY.

It is found in the cytoplasm. The catalysed reaction is a fatty acyl-[ACP] + phosphate = an acyl phosphate + holo-[ACP]. The protein operates within lipid metabolism; phospholipid metabolism. Catalyzes the reversible formation of acyl-phosphate (acyl-PO(4)) from acyl-[acyl-carrier-protein] (acyl-ACP). This enzyme utilizes acyl-ACP as fatty acyl donor, but not acyl-CoA. In Limosilactobacillus fermentum (strain NBRC 3956 / LMG 18251) (Lactobacillus fermentum), this protein is Phosphate acyltransferase.